Consider the following 330-residue polypeptide: Phenylalanine--tRNA ligase alpha subunit (330 aa).

E257 is a Mg(2+) binding site.

The protein belongs to the class-II aminoacyl-tRNA synthetase family. Phe-tRNA synthetase alpha subunit type 1 subfamily. In terms of assembly, tetramer of two alpha and two beta subunits. It depends on Mg(2+) as a cofactor.

It is found in the cytoplasm. The enzyme catalyses tRNA(Phe) + L-phenylalanine + ATP = L-phenylalanyl-tRNA(Phe) + AMP + diphosphate + H(+). In Acaryochloris marina (strain MBIC 11017), this protein is Phenylalanine--tRNA ligase alpha subunit.